Reading from the N-terminus, the 92-residue chain is Small ribosomal subunit protein uS19 (92 aa).

The protein belongs to the universal ribosomal protein uS19 family.

In terms of biological role, protein S19 forms a complex with S13 that binds strongly to the 16S ribosomal RNA. The chain is Small ribosomal subunit protein uS19 from Novosphingobium aromaticivorans (strain ATCC 700278 / DSM 12444 / CCUG 56034 / CIP 105152 / NBRC 16084 / F199).